Reading from the N-terminus, the 173-residue chain is Putative phosphoesterase GWCH70_0799 (173 aa).

His-34 (proton donor) is an active-site residue. 2 short sequence motifs (HXTX) span residues 34-37 (HLTL) and 115-118 (HITI). The active-site Proton acceptor is the His-115.

It belongs to the 2H phosphoesterase superfamily. YjcG family.

This Geobacillus sp. (strain WCH70) protein is Putative phosphoesterase GWCH70_0799.